Here is a 216-residue protein sequence, read N- to C-terminus: Uracil phosphoribosyltransferase (216 aa).

CTP-binding positions include 29-30 and Arg37; that span reads RK. 30-34 is a binding site for GTP; that stretch reads KNLVR. Arg80 provides a ligand contact to 5-phospho-alpha-D-ribose 1-diphosphate. 87–96 is a binding site for CTP; sequence EGLLKAFPKA. Residues Arg105 and 140–148 contribute to the 5-phospho-alpha-D-ribose 1-diphosphate site; that span reads DPMIATAST. Uracil contacts are provided by residues Ile203 and 208–210; that span reads GDA. Position 209 (Asp209) interacts with 5-phospho-alpha-D-ribose 1-diphosphate.

Belongs to the UPRTase family. Homotetramer. The cofactor is Mg(2+).

The enzyme catalyses UMP + diphosphate = 5-phospho-alpha-D-ribose 1-diphosphate + uracil. It functions in the pathway pyrimidine metabolism; UMP biosynthesis via salvage pathway; UMP from uracil: step 1/1. With respect to regulation, allosterically activated by GTP. Inhibited by CTP and UMP in combination. In terms of biological role, catalyzes the conversion of uracil and 5-phospho-alpha-D-ribose 1-diphosphate (PRPP) to UMP and diphosphate. The sequence is that of Uracil phosphoribosyltransferase (upp) from Saccharolobus solfataricus (strain ATCC 35092 / DSM 1617 / JCM 11322 / P2) (Sulfolobus solfataricus).